A 319-amino-acid polypeptide reads, in one-letter code: Na(+)-translocating NADH-quinone reductase subunit C (319 aa).

A helical membrane pass occupies residues 14 to 34; it reads WYVILFIFALSLFSSVFLSTV. Residue Thr283 is modified to FMN phosphoryl threonine.

Belongs to the NqrC family. In terms of assembly, composed of six subunits; NqrA, NqrB, NqrC, NqrD, NqrE and NqrF. The cofactor is FMN.

The protein resides in the cell inner membrane. The catalysed reaction is a ubiquinone + n Na(+)(in) + NADH + H(+) = a ubiquinol + n Na(+)(out) + NAD(+). In terms of biological role, NQR complex catalyzes the reduction of ubiquinone-1 to ubiquinol by two successive reactions, coupled with the transport of Na(+) ions from the cytoplasm to the periplasm. NqrA to NqrE are probably involved in the second step, the conversion of ubisemiquinone to ubiquinol. The polypeptide is Na(+)-translocating NADH-quinone reductase subunit C (Chlamydia caviae (strain ATCC VR-813 / DSM 19441 / 03DC25 / GPIC) (Chlamydophila caviae)).